The chain runs to 161 residues: DNA-directed RNA polymerase 18 kDa subunit (161 aa).

Belongs to the poxviridae DNA-directed RNA polymerase 18 kDa subunit family. As to quaternary structure, the DNA-dependent RNA polymerase used for intermediate and late genes expression consists of eight subunits Rpo30/OPG66, Rpo7/OPG90, Rpo22/OPG103, Rpo147/OPG105, Rpo18/OPG119, Rpo19/OPG131, Rpo132/OPG151 and Rpo35/OPG156. The same holoenzyme, with the addition of the transcription-specificity factor OPG109, is used for early gene expression.

Its subcellular location is the virion. The enzyme catalyses RNA(n) + a ribonucleoside 5'-triphosphate = RNA(n+1) + diphosphate. In terms of biological role, part of the DNA-dependent RNA polymerase which catalyzes the transcription of viral DNA into RNA using the four ribonucleoside triphosphates as substrates. Responsible for the transcription of early, intermediate and late genes. DNA-dependent RNA polymerase associates with the early transcription factor (ETF), itself composed of OPG118 and OPG133, thereby allowing the early genes transcription. Late transcription, and probably also intermediate transcription, require newly synthesized RNA polymerase. This Vaccinia virus (strain Copenhagen) (VACV) protein is DNA-directed RNA polymerase 18 kDa subunit (OPG119).